The sequence spans 211 residues: Octanoyltransferase (211 aa).

A BPL/LPL catalytic domain is found at 32-207 (PCTYDEIWFV…ELSKFLEIFI (176 aa)). Substrate-binding positions include 71–78 (RGGQITYH), 138–140 (SLG), and 151–153 (GLA). C169 (acyl-thioester intermediate) is an active-site residue.

This sequence belongs to the LipB family.

The protein resides in the cytoplasm. The catalysed reaction is octanoyl-[ACP] + L-lysyl-[protein] = N(6)-octanoyl-L-lysyl-[protein] + holo-[ACP] + H(+). The protein operates within protein modification; protein lipoylation via endogenous pathway; protein N(6)-(lipoyl)lysine from octanoyl-[acyl-carrier-protein]: step 1/2. Functionally, catalyzes the transfer of endogenously produced octanoic acid from octanoyl-acyl-carrier-protein onto the lipoyl domains of lipoate-dependent enzymes. Lipoyl-ACP can also act as a substrate although octanoyl-ACP is likely to be the physiological substrate. This is Octanoyltransferase from Buchnera aphidicola subsp. Acyrthosiphon pisum (strain APS) (Acyrthosiphon pisum symbiotic bacterium).